Reading from the N-terminus, the 432-residue chain is Probable exopolygalacturonase X (432 aa).

Positions methionine 1–glycine 23 are cleaved as a signal peptide. 3 N-linked (GlcNAc...) asparagine glycosylation sites follow: asparagine 113, asparagine 129, and asparagine 199. A PbH1 1 repeat occupies serine 231–proline 252. Aspartate 245 acts as the Proton donor in catalysis. An intrachain disulfide couples cysteine 247 to cysteine 264. 2 N-linked (GlcNAc...) asparagine glycosylation sites follow: asparagine 253 and asparagine 265. PbH1 repeat units lie at residues serine 254–serine 274, valine 285–valine 306, and valine 327–glutamine 348. Histidine 268 is an active-site residue. N-linked (GlcNAc...) asparagine glycosylation is found at asparagine 292, asparagine 297, asparagine 329, asparagine 354, and asparagine 364. Residues proline 362–serine 394 form a PbH1 5 repeat. A disulfide bond links cysteine 392 and cysteine 398.

The protein belongs to the glycosyl hydrolase 28 family.

It localises to the secreted. The enzyme catalyses [(1-&gt;4)-alpha-D-galacturonosyl](n) + H2O = alpha-D-galacturonate + [(1-&gt;4)-alpha-D-galacturonosyl](n-1). In terms of biological role, specific in hydrolyzing the terminal glycosidic bond of polygalacturonic acid and oligogalacturonates. The sequence is that of Probable exopolygalacturonase X (pgaX) from Aspergillus fumigatus (strain CBS 144.89 / FGSC A1163 / CEA10) (Neosartorya fumigata).